We begin with the raw amino-acid sequence, 258 residues long: Imidazole glycerol phosphate synthase subunit HisF (258 aa).

Residues Asp12 and Asp131 contribute to the active site.

Belongs to the HisA/HisF family. In terms of assembly, heterodimer of HisH and HisF.

The protein resides in the cytoplasm. The catalysed reaction is 5-[(5-phospho-1-deoxy-D-ribulos-1-ylimino)methylamino]-1-(5-phospho-beta-D-ribosyl)imidazole-4-carboxamide + L-glutamine = D-erythro-1-(imidazol-4-yl)glycerol 3-phosphate + 5-amino-1-(5-phospho-beta-D-ribosyl)imidazole-4-carboxamide + L-glutamate + H(+). The protein operates within amino-acid biosynthesis; L-histidine biosynthesis; L-histidine from 5-phospho-alpha-D-ribose 1-diphosphate: step 5/9. Its function is as follows. IGPS catalyzes the conversion of PRFAR and glutamine to IGP, AICAR and glutamate. The HisF subunit catalyzes the cyclization activity that produces IGP and AICAR from PRFAR using the ammonia provided by the HisH subunit. The polypeptide is Imidazole glycerol phosphate synthase subunit HisF (Sinorhizobium medicae (strain WSM419) (Ensifer medicae)).